The following is a 134-amino-acid chain: Small ribosomal subunit protein uS9 (134 aa).

Positions 97-134 are disordered; that stretch reads ENRQDLKSCGFLTRDPRKKERKKYGHKKARKSFQFSKR. The segment covering 115–134 has biased composition (basic residues); it reads KERKKYGHKKARKSFQFSKR.

It belongs to the universal ribosomal protein uS9 family.

The protein is Small ribosomal subunit protein uS9 (rpsI) of Chlamydia pneumoniae (Chlamydophila pneumoniae).